We begin with the raw amino-acid sequence, 422 residues long: Serine--tRNA ligase (422 aa).

229–231 (TAE) contacts L-serine. Residue 260-262 (RKE) participates in ATP binding. Glutamate 283 is a binding site for L-serine. 347-350 (EISS) is a binding site for ATP. Serine 383 is a binding site for L-serine.

This sequence belongs to the class-II aminoacyl-tRNA synthetase family. Type-1 seryl-tRNA synthetase subfamily. Homodimer. The tRNA molecule binds across the dimer.

It is found in the cytoplasm. It catalyses the reaction tRNA(Ser) + L-serine + ATP = L-seryl-tRNA(Ser) + AMP + diphosphate + H(+). The enzyme catalyses tRNA(Sec) + L-serine + ATP = L-seryl-tRNA(Sec) + AMP + diphosphate + H(+). The protein operates within aminoacyl-tRNA biosynthesis; selenocysteinyl-tRNA(Sec) biosynthesis; L-seryl-tRNA(Sec) from L-serine and tRNA(Sec): step 1/1. Functionally, catalyzes the attachment of serine to tRNA(Ser). Is also able to aminoacylate tRNA(Sec) with serine, to form the misacylated tRNA L-seryl-tRNA(Sec), which will be further converted into selenocysteinyl-tRNA(Sec). This Natranaerobius thermophilus (strain ATCC BAA-1301 / DSM 18059 / JW/NM-WN-LF) protein is Serine--tRNA ligase.